The following is a 312-amino-acid chain: tRNA uridine(34) hydroxylase (312 aa).

One can recognise a Rhodanese domain in the interval Arg-130–Leu-225. Residue Cys-185 is the Cysteine persulfide intermediate of the active site.

The protein belongs to the TrhO family.

It carries out the reaction uridine(34) in tRNA + AH2 + O2 = 5-hydroxyuridine(34) in tRNA + A + H2O. Catalyzes oxygen-dependent 5-hydroxyuridine (ho5U) modification at position 34 in tRNAs. This is tRNA uridine(34) hydroxylase from Corynebacterium glutamicum (strain ATCC 13032 / DSM 20300 / JCM 1318 / BCRC 11384 / CCUG 27702 / LMG 3730 / NBRC 12168 / NCIMB 10025 / NRRL B-2784 / 534).